Consider the following 207-residue polypeptide: Guanylate kinase (207 aa).

A Guanylate kinase-like domain is found at 17–197 (GRLVVLAGPS…SCDELVSLLV (181 aa)). 24–31 (GPSAVGKS) is a binding site for ATP.

The protein belongs to the guanylate kinase family.

The protein resides in the cytoplasm. The catalysed reaction is GMP + ATP = GDP + ADP. Essential for recycling GMP and indirectly, cGMP. The chain is Guanylate kinase from Rhodococcus jostii (strain RHA1).